The sequence spans 21 residues: Fibrinogen beta chain (21 aa).

Residue glutamine 1 is modified to Pyrrolidone carboxylic acid. Acidic residues predominate over residues 1 to 11 (QFPTDYDEGED). The tract at residues 1–21 (QFPTDYDEGEDDRPKSGLGAR) is disordered. O-linked (GalNAc...) threonine glycosylation occurs at threonine 4. The residue at position 6 (tyrosine 6) is a Sulfotyrosine.

Heterohexamer; disulfide linked. Contains 2 sets of 3 non-identical chains (alpha, beta and gamma). The 2 heterotrimers are in head to head conformation with the N-termini in a small central domain. In terms of processing, conversion of fibrinogen to fibrin is triggered by thrombin, which cleaves fibrinopeptides A and B from alpha and beta chains, and thus exposes the N-terminal polymerization sites responsible for the formation of the soft clot.

The protein resides in the secreted. Its function is as follows. Cleaved by the protease thrombin to yield monomers which, together with fibrinogen alpha (FGA) and fibrinogen gamma (FGG), polymerize to form an insoluble fibrin matrix. Fibrin has a major function in hemostasis as one of the primary components of blood clots. In addition, functions during the early stages of wound repair to stabilize the lesion and guide cell migration during re-epithelialization. Was originally thought to be essential for platelet aggregation, based on in vitro studies using anticoagulated blood. However subsequent studies have shown that it is not absolutely required for thrombus formation in vivo. Enhances expression of SELP in activated platelets. Maternal fibrinogen is essential for successful pregnancy. Fibrin deposition is also associated with infection, where it protects against IFNG-mediated hemorrhage. May also facilitate the antibacterial immune response via both innate and T-cell mediated pathways. In Syncerus caffer (African buffalo), this protein is Fibrinogen beta chain (FGB).